Reading from the N-terminus, the 440-residue chain is Discs overgrown protein kinase (440 aa).

One can recognise a Protein kinase domain in the interval 9-277 (YRLGRKIGSG…HLRKLFRNLF (269 aa)). Residues 15–23 (IGSGSFGDI) and lysine 38 contribute to the ATP site. Residue aspartate 128 is the Proton acceptor of the active site. A nuclear localization signal; essential for interaction with Bdbt and important for nuclear localization region spans residues 221–224 (KRQK). 2 positions are modified to phosphoserine: serine 333 and serine 334. The segment at 376-440 (SQLIGGNGLN…GGGGGVGNAK (65 aa)) is disordered. The segment covering 413–440 (QGGGGGGGGVGVGGMPSGGGGGGVGNAK) has biased composition (gly residues).

The protein belongs to the protein kinase superfamily. CK1 Ser/Thr protein kinase family. Casein kinase I subfamily. As to quaternary structure, forms a complex with per. Interacts with Dlish. Interacts (via nuclear localization signal) with Bdbt. As to expression, detected in the head (at protein level). Expressed in photoreceptor cells of the eyes as well as in the region situated between the optic lobe and the central brain.

The protein resides in the nucleus. The protein localises to the cytoplasm. It localises to the cytosol. The enzyme catalyses L-seryl-[protein] + ATP = O-phospho-L-seryl-[protein] + ADP + H(+). It carries out the reaction L-threonyl-[protein] + ATP = O-phospho-L-threonyl-[protein] + ADP + H(+). Serine/threonine-protein kinase which is involved in the circadian rhythm pathway, viability and planar cell polarity. In the circadian rhythm pathway, phosphorylates the clock gene period (per) and targets it for degradation in the absence of timeless (tim), thus contributing to production of the circadian oscillations of the clock genes. Together with CkIalpha, regulates processing of ci by phosphorylating it, which promotes its binding to slmb, the F-box recognition component of the SCF(slmb) E3 ubiquitin-protein ligase. Involved in the inhibition of apoptosis during cell proliferation and growth arrest in imaginal disks. Also functions in planar cell polarity. The protein is Discs overgrown protein kinase (dco) of Drosophila melanogaster (Fruit fly).